The primary structure comprises 756 residues: 3-O-alpha-D-glucosyl-L-rhamnose phosphorylase (756 aa).

358–359 lines the substrate pocket; that stretch reads WD. The Proton donor role is filled by E486. 590-591 provides a ligand contact to substrate; the sequence is KQ.

It belongs to the glycosyl hydrolase 65 family. In terms of assembly, monomer.

The protein localises to the cytoplasm. It catalyses the reaction 3-O-alpha-D-glucosyl-L-rhamnose + phosphate = beta-D-glucose 1-phosphate + L-rhamnopyranose. Functionally, phosphorylase showing strict alpha-1,3-regioselectivity and producing 3-O-alpha-D-glucopyranosyl-L-rhamnopyranose. Specific for L-rhamnose as acceptor and beta-D-glucose 1-phosphate as donor. Does not phosphorylate alpha,alpha-trehalose, kojibiose, nigerose, or maltose. The sequence is that of 3-O-alpha-D-glucosyl-L-rhamnose phosphorylase from Lachnoclostridium phytofermentans (strain ATCC 700394 / DSM 18823 / ISDg) (Clostridium phytofermentans).